Here is a 264-residue protein sequence, read N- to C-terminus: Thymidylate synthase (264 aa).

Residues R21 and 126 to 127 (RR) contribute to the dUMP site. The active-site Nucleophile is C146. DUMP-binding positions include 166–169 (RSAD), N177, and 207–209 (HLY). D169 serves as a coordination point for (6R)-5,10-methylene-5,6,7,8-tetrahydrofolate. A263 is a binding site for (6R)-5,10-methylene-5,6,7,8-tetrahydrofolate.

It belongs to the thymidylate synthase family. Bacterial-type ThyA subfamily. Homodimer.

It is found in the cytoplasm. It carries out the reaction dUMP + (6R)-5,10-methylene-5,6,7,8-tetrahydrofolate = 7,8-dihydrofolate + dTMP. Its pathway is pyrimidine metabolism; dTTP biosynthesis. Catalyzes the reductive methylation of 2'-deoxyuridine-5'-monophosphate (dUMP) to 2'-deoxythymidine-5'-monophosphate (dTMP) while utilizing 5,10-methylenetetrahydrofolate (mTHF) as the methyl donor and reductant in the reaction, yielding dihydrofolate (DHF) as a by-product. This enzymatic reaction provides an intracellular de novo source of dTMP, an essential precursor for DNA biosynthesis. This chain is Thymidylate synthase, found in Halorhodospira halophila (strain DSM 244 / SL1) (Ectothiorhodospira halophila (strain DSM 244 / SL1)).